The following is a 236-amino-acid chain: 6-carboxyhexanoate--CoA ligase (236 aa).

Belongs to the BioW family. Homodimer. Requires Mg(2+) as cofactor.

It catalyses the reaction heptanedioate + ATP + CoA = 6-carboxyhexanoyl-CoA + AMP + diphosphate. The protein operates within metabolic intermediate metabolism; pimeloyl-CoA biosynthesis; pimeloyl-CoA from pimelate: step 1/1. In terms of biological role, catalyzes the transformation of pimelate into pimeloyl-CoA with concomitant hydrolysis of ATP to AMP. The protein is 6-carboxyhexanoate--CoA ligase of Methanococcus aeolicus (strain ATCC BAA-1280 / DSM 17508 / OCM 812 / Nankai-3).